Here is a 476-residue protein sequence, read N- to C-terminus: Cysteine--tRNA ligase (476 aa).

Cys-36 is a Zn(2+) binding site. The 'HIGH' region signature appears at 38–48 (PTVYDYAHIGN). Cys-221, His-246, and Glu-250 together coordinate Zn(2+). Residues 278 to 282 (KMSKS) carry the 'KMSKS' region motif. Lys-281 lines the ATP pocket.

It belongs to the class-I aminoacyl-tRNA synthetase family. As to quaternary structure, monomer. Zn(2+) is required as a cofactor.

Its subcellular location is the cytoplasm. The catalysed reaction is tRNA(Cys) + L-cysteine + ATP = L-cysteinyl-tRNA(Cys) + AMP + diphosphate. The chain is Cysteine--tRNA ligase from Chlamydia felis (strain Fe/C-56) (Chlamydophila felis).